The following is a 397-amino-acid chain: ATP phosphoribosyltransferase regulatory subunit (397 aa).

Belongs to the class-II aminoacyl-tRNA synthetase family. HisZ subfamily. As to quaternary structure, heteromultimer composed of HisG and HisZ subunits.

It is found in the cytoplasm. It participates in amino-acid biosynthesis; L-histidine biosynthesis; L-histidine from 5-phospho-alpha-D-ribose 1-diphosphate: step 1/9. Required for the first step of histidine biosynthesis. May allow the feedback regulation of ATP phosphoribosyltransferase activity by histidine. The polypeptide is ATP phosphoribosyltransferase regulatory subunit (Halalkalibacterium halodurans (strain ATCC BAA-125 / DSM 18197 / FERM 7344 / JCM 9153 / C-125) (Bacillus halodurans)).